Consider the following 131-residue polypeptide: D-ribose pyranase (131 aa).

His-20 (proton donor) is an active-site residue. Substrate is bound by residues Asp-28, His-98, and 120–122; that span reads YAN.

Belongs to the RbsD / FucU family. RbsD subfamily. Homodecamer.

It localises to the cytoplasm. It catalyses the reaction beta-D-ribopyranose = beta-D-ribofuranose. It participates in carbohydrate metabolism; D-ribose degradation; D-ribose 5-phosphate from beta-D-ribopyranose: step 1/2. In terms of biological role, catalyzes the interconversion of beta-pyran and beta-furan forms of D-ribose. This Bacillus cereus (strain AH187) protein is D-ribose pyranase.